We begin with the raw amino-acid sequence, 423 residues long: Histidine--tRNA ligase (423 aa).

This sequence belongs to the class-II aminoacyl-tRNA synthetase family. In terms of assembly, homodimer.

It localises to the cytoplasm. The catalysed reaction is tRNA(His) + L-histidine + ATP = L-histidyl-tRNA(His) + AMP + diphosphate + H(+). In Anoxybacillus flavithermus (strain DSM 21510 / WK1), this protein is Histidine--tRNA ligase.